Here is a 544-residue protein sequence, read N- to C-terminus: Cytochrome P450 monooxygenase notG' (544 aa).

Residues 1 to 22 form the signal peptide; it reads MELPFSAMSLLYLLVGIAGVIS. Transmembrane regions (helical) follow at residues 42 to 62 and 66 to 86; these read WYTLIITAPTVVVSIVWGLPL and AKATGGWALTYFAGLYTSLLL. N-linked (GlcNAc...) asparagine glycans are attached at residues N226 and N404. Residue C487 coordinates heme.

Belongs to the cytochrome P450 family. Requires heme as cofactor.

It localises to the membrane. The protein operates within alkaloid biosynthesis. Its function is as follows. Cytochrome P450 monooxygenase; part of the gene cluster that mediates the biosynthesis of notoamide, a fungal indole alkaloid that belongs to a family of natural products containing a characteristic bicyclo[2.2.2]diazaoctane core. The first step of notoamide biosynthesis involves coupling of L-proline and L-tryptophan by the bimodular NRPS notE', to produce cyclo-L-tryptophan-L-proline called brevianamide F. The reverse prenyltransferase notF' then acts as a deoxybrevianamide E synthase and converts brevianamide F to deoxybrevianamide E via reverse prenylation at C-2 of the indole ring leading to the bicyclo[2.2.2]diazaoctane core. Deoxybrevianamide E is further hydroxylated at C-6 of the indole ring, likely catalyzed by the cytochrome P450 monooxygenase notG', to yield 6-hydroxy-deoxybrevianamide E. 6-hydroxy-deoxybrevianamide E is a specific substrate of the prenyltransferase notC' for normal prenylation at C-7 to produce 6-hydroxy-7-prenyl-deoxybrevianamide, also called notoamide S. As the proposed pivotal branching point in notoamide biosynthesis, notoamide S can be diverted to notoamide E through an oxidative pyran ring closure putatively catalyzed by either notH' cytochrome P450 monooxygenase or the notD' FAD-linked oxidoreductase. This step would be followed by an indole 2,3-epoxidation-initiated pinacol-like rearrangement catalyzed by the notB' FAD-dependent monooxygenase leading to the formation of notoamide C and notoamide D. On the other hand notoamide S is converted to notoamide T by notH' (or notD'), a bifunctional oxidase that also functions as the intramolecular Diels-Alderase responsible for generation of (-)-notoamide T. To generate antipodal (+)-notoaminide T, notH (or notD) in Aspergillus strain MF297-2 is expected to catalyze a Diels-Alder reaction leading to the opposite stereochemistry. The remaining oxidoreductase notD' (or notH') likely catalyzes the oxidative pyran ring formation to yield (-)-stephacidin A. The FAD-dependent monooxygenase notI' is highly similar to notB' and is predicted to catalyze a similar conversion from (-)-stephacidin A to (+)-notoamide B via the 2,3-epoxidation of (-)-stephacidin A followed by a pinacol-type rearrangement. Finally, it remains unclear which enzyme could be responsible for the final hydroxylation steps leading to notoamide A and sclerotiamide. This chain is Cytochrome P450 monooxygenase notG', found in Aspergillus versicolor.